The following is a 361-amino-acid chain: Peptide chain release factor 1 (361 aa).

At Q236 the chain carries N5-methylglutamine.

It belongs to the prokaryotic/mitochondrial release factor family. Post-translationally, methylated by PrmC. Methylation increases the termination efficiency of RF1.

The protein localises to the cytoplasm. Peptide chain release factor 1 directs the termination of translation in response to the peptide chain termination codons UAG and UAA. The chain is Peptide chain release factor 1 from Lactobacillus delbrueckii subsp. bulgaricus (strain ATCC BAA-365 / Lb-18).